Here is a 156-residue protein sequence, read N- to C-terminus: Small ribosomal subunit protein uS7 (156 aa).

This sequence belongs to the universal ribosomal protein uS7 family. Part of the 30S ribosomal subunit. Contacts proteins S9 and S11.

One of the primary rRNA binding proteins, it binds directly to 16S rRNA where it nucleates assembly of the head domain of the 30S subunit. Is located at the subunit interface close to the decoding center, probably blocks exit of the E-site tRNA. This chain is Small ribosomal subunit protein uS7, found in Rhizorhabdus wittichii (strain DSM 6014 / CCUG 31198 / JCM 15750 / NBRC 105917 / EY 4224 / RW1) (Sphingomonas wittichii).